We begin with the raw amino-acid sequence, 472 residues long: Pyridine nucleotide-disulfide oxidoreductase domain-containing protein 1 (472 aa).

Belongs to the class-I pyridine nucleotide-disulfide oxidoreductase family. PYROXD1 subfamily. The cofactor is FAD.

Its function is as follows. Probable oxidoreductase. The polypeptide is Pyridine nucleotide-disulfide oxidoreductase domain-containing protein 1 (Drosophila melanogaster (Fruit fly)).